A 118-amino-acid chain; its full sequence is Class I hydrophobin 1 (118 aa).

Residues 1–20 (MFARLSTALLAFTLATAVVA) form the signal peptide. 4 disulfides stabilise this stretch: cysteine 34/cysteine 97, cysteine 41/cysteine 91, cysteine 42/cysteine 77, and cysteine 98/cysteine 111. A glycan (N-linked (GlcNAc...) asparagine) is linked at asparagine 54. The N-linked (GlcNAc...) asparagine glycan is linked to asparagine 115.

This sequence belongs to the fungal hydrophobin family. Self-assembles to form functional amyloid fibrils called rodlets. Self-assembly into fibrillar rodlets occurs spontaneously at hydrophobic:hydrophilic interfaces and the rodlets further associate laterally to form amphipathic monolayers.

It is found in the secreted. It localises to the cell wall. Functionally, aerial growth, conidiation, and dispersal of filamentous fungi in the environment rely upon a capability of their secreting small amphipathic proteins called hydrophobins (HPBs) with low sequence identity. Class I can self-assemble into an outermost layer of rodlet bundles on aerial cell surfaces, conferring cellular hydrophobicity that supports fungal growth, development and dispersal; whereas Class II form highly ordered films at water-air interfaces through intermolecular interactions but contribute nothing to the rodlet structure. This Coprinopsis cinerea (strain Okayama-7 / 130 / ATCC MYA-4618 / FGSC 9003) (Inky cap fungus) protein is Class I hydrophobin 1.